The sequence spans 186 residues: Elongation factor P (186 aa).

This sequence belongs to the elongation factor P family.

The protein resides in the cytoplasm. The protein operates within protein biosynthesis; polypeptide chain elongation. Involved in peptide bond synthesis. Stimulates efficient translation and peptide-bond synthesis on native or reconstituted 70S ribosomes in vitro. Probably functions indirectly by altering the affinity of the ribosome for aminoacyl-tRNA, thus increasing their reactivity as acceptors for peptidyl transferase. The polypeptide is Elongation factor P (Maridesulfovibrio salexigens (strain ATCC 14822 / DSM 2638 / NCIMB 8403 / VKM B-1763) (Desulfovibrio salexigens)).